The following is an 866-amino-acid chain: Probable outer membrane usher protein ElfC (866 aa).

The signal sequence occupies residues 1–35 (MYRTHRQHSLLSSGGVPSFIGGLVVFVSAAFNAQA).

The protein belongs to the fimbrial export usher family.

It localises to the cell outer membrane. In terms of biological role, part of the elfADCG-ycbUVF fimbrial operon, which promotes adhesion of bacteria to different abiotic surfaces. Could be involved in the export and assembly of the ElfA fimbrial subunits across the outer membrane. This is Probable outer membrane usher protein ElfC (elfC) from Escherichia coli (strain K12).